We begin with the raw amino-acid sequence, 203 residues long: dITP/XTP pyrophosphatase (203 aa).

7–12 contributes to the substrate binding site; sequence TGNRDK. The active-site Proton acceptor is Asp73. Asp73 contributes to the Mg(2+) binding site. Substrate is bound by residues Ser74, 155–158, Lys178, and 183–184; these read FGYD and HR.

It belongs to the HAM1 NTPase family. In terms of assembly, homodimer. Mg(2+) is required as a cofactor.

The catalysed reaction is XTP + H2O = XMP + diphosphate + H(+). It carries out the reaction dITP + H2O = dIMP + diphosphate + H(+). It catalyses the reaction ITP + H2O = IMP + diphosphate + H(+). In terms of biological role, pyrophosphatase that catalyzes the hydrolysis of nucleoside triphosphates to their monophosphate derivatives, with a high preference for the non-canonical purine nucleotides XTP (xanthosine triphosphate), dITP (deoxyinosine triphosphate) and ITP. Seems to function as a house-cleaning enzyme that removes non-canonical purine nucleotides from the nucleotide pool, thus preventing their incorporation into DNA/RNA and avoiding chromosomal lesions. The protein is dITP/XTP pyrophosphatase of Wolinella succinogenes (strain ATCC 29543 / DSM 1740 / CCUG 13145 / JCM 31913 / LMG 7466 / NCTC 11488 / FDC 602W) (Vibrio succinogenes).